The sequence spans 365 residues: 3-isopropylmalate dehydrogenase (365 aa).

78 to 91 (GPKWDTLPAEERPE) is a binding site for NAD(+). Positions 99, 109, 138, and 227 each coordinate substrate. Mg(2+) contacts are provided by Asp227, Asp251, and Asp255. Residue 285–297 (GSAPDIAGKNIAN) participates in NAD(+) binding.

The protein belongs to the isocitrate and isopropylmalate dehydrogenases family. LeuB type 1 subfamily. As to quaternary structure, homodimer. It depends on Mg(2+) as a cofactor. Requires Mn(2+) as cofactor.

It is found in the cytoplasm. It catalyses the reaction (2R,3S)-3-isopropylmalate + NAD(+) = 4-methyl-2-oxopentanoate + CO2 + NADH. It participates in amino-acid biosynthesis; L-leucine biosynthesis; L-leucine from 3-methyl-2-oxobutanoate: step 3/4. Functionally, catalyzes the oxidation of 3-carboxy-2-hydroxy-4-methylpentanoate (3-isopropylmalate) to 3-carboxy-4-methyl-2-oxopentanoate. The product decarboxylates to 4-methyl-2 oxopentanoate. The chain is 3-isopropylmalate dehydrogenase from Syntrophotalea carbinolica (strain DSM 2380 / NBRC 103641 / GraBd1) (Pelobacter carbinolicus).